The sequence spans 112 residues: Urease subunit beta (112 aa).

This sequence belongs to the urease beta subunit family. As to quaternary structure, heterotrimer of UreA (gamma), UreB (beta) and UreC (alpha) subunits. Three heterotrimers associate to form the active enzyme.

The protein localises to the cytoplasm. The enzyme catalyses urea + 2 H2O + H(+) = hydrogencarbonate + 2 NH4(+). It functions in the pathway nitrogen metabolism; urea degradation; CO(2) and NH(3) from urea (urease route): step 1/1. The polypeptide is Urease subunit beta (Polaromonas sp. (strain JS666 / ATCC BAA-500)).